The chain runs to 460 residues: Serine incorporator 5 (460 aa).

Residues 1 to 36 (MSARCCAGQLACCCGSAGCALCCGCCPKFRQSRSTR) are Extracellular-facing. A helical membrane pass occupies residues 37–57 (FMYLFYFTLVIIPCCVMMSPS). The Cytoplasmic segment spans residues 58-89 (VMKQMTEHIPFFEDFCKGIKAGDTCENLVGYS). The helical transmembrane segment at 90-110 (AVYRVCFGMACFFFVFCVLTF) threads the bilayer. The Extracellular segment spans residues 111-124 (KVNNSKSCRASIHN). An N-linked (GlcNAc...) asparagine glycan is attached at asparagine 113. A helical transmembrane segment spans residues 125–145 (GFWFFKLLLLGAMCSGAFFIP). The Cytoplasmic segment spans residues 146 to 156 (DQETFLNVWRY). A helical membrane pass occupies residues 157 to 177 (VGAVGSFFFICIQLLLIVEFA). Over 178 to 197 (HKWNKNWTAGTVRNKLWYAS) the chain is Extracellular. A glycan (N-linked (GlcNAc...) asparagine) is linked at asparagine 183. The helical transmembrane segment at 198 to 218 (LSLALIMYSIAVGGLALMAVF) threads the bilayer. The Cytoplasmic segment spans residues 219–229 (YTQWDDCMDNK). Residues 230–250 (ILLGVHGGLCVLISLAAISPC) form a helical membrane-spanning segment. Over 251–258 (VQNRQPHS) the chain is Extracellular. The helical transmembrane segment at 259-279 (GLLQPGLISCYVTYLTFSALT) threads the bilayer. The Cytoplasmic portion of the chain corresponds to 280–309 (SKPEKVVKDEHGKNVTICVPDFGQDFRRDE). A helical transmembrane segment spans residues 310–330 (SMVTWLGTLLLVVCISYSCLT). Topologically, residues 331-390 (STTRSSSDALQRRYGAPELEVARCCFCFGPDGEDTEEQQNVKEGPRVIYDEKKGTVYSYS) are extracellular. The helical transmembrane segment at 391–411 (YFHFVLLLASLYVMMTLTSWF) threads the bilayer. The Cytoplasmic segment spans residues 412-427 (HYENATIETFFVGSWS). Residues 428-448 (IFWVKMASCWMCVLLYLWTLV) form a helical membrane-spanning segment. At 449–460 (APLCCPSRQFSV) the chain is on the extracellular side.

It belongs to the TDE1 family. As to expression, brain. Expressed at high levels in the white matter and the oligodendroglial cells of the brain. Expressed at low levels in the liver.

The protein localises to the cell membrane. The enzyme catalyses a 1,2-diacyl-sn-glycero-3-phospho-L-serine(in) = a 1,2-diacyl-sn-glycero-3-phospho-L-serine(out). It catalyses the reaction a 1,2-diacyl-sn-glycero-3-phosphocholine(in) = a 1,2-diacyl-sn-glycero-3-phosphocholine(out). It carries out the reaction a 1,2-diacyl-sn-glycero-3-phosphoethanolamine(in) = a 1,2-diacyl-sn-glycero-3-phosphoethanolamine(out). In terms of biological role, restriction factor required to restrict infectivity of gammaretroviruses: acts by inhibiting an early step of viral infection. Impairs the penetration of the viral particle into the cytoplasm. Non-ATP-dependent, non-specific lipid transporter for phosphatidylserine, phosphatidylcholine, and phosphatidylethanolamine. Functions as a scramblase that flips lipids in both directions across the membrane. Phospholipid scrambling results in gammaretroviral surface exposure of phosphatidylserine and loss of membrane asymmetry, which leads to loss of infectivity. Enhances the incorporation of serine into phosphatidylserine and sphingolipids. May play a role in providing serine molecules for the formation of myelin glycosphingolipids in oligodendrocytes. In Rattus norvegicus (Rat), this protein is Serine incorporator 5 (Serinc5).